The chain runs to 175 residues: MGRTLESKKQIVEEIKGLLDKADMALVLDYQGLSIKEMSDLRSRLEQSSGICKVTKNTLMRKAINGDATWSGLESLLNGTNAFVLVKGDVGSALKAVQAFQKETKKSETKGGLYEGKLLTQDEIKAIAALPSKEALMAQIAGALNSITTKIAVGVNEIPSGLARSLKQHAENSES.

It belongs to the universal ribosomal protein uL10 family. Part of the ribosomal stalk of the 50S ribosomal subunit. The N-terminus interacts with L11 and the large rRNA to form the base of the stalk. The C-terminus forms an elongated spine to which L12 dimers bind in a sequential fashion forming a multimeric L10(L12)X complex.

In terms of biological role, forms part of the ribosomal stalk, playing a central role in the interaction of the ribosome with GTP-bound translation factors. In Prochlorococcus marinus (strain SARG / CCMP1375 / SS120), this protein is Large ribosomal subunit protein uL10.